A 503-amino-acid chain; its full sequence is Maturase K (503 aa).

This sequence belongs to the intron maturase 2 family. MatK subfamily.

The protein localises to the plastid. Its subcellular location is the chloroplast. Usually encoded in the trnK tRNA gene intron. Probably assists in splicing its own and other chloroplast group II introns. The sequence is that of Maturase K from Liquidambar styraciflua (Sweetgum tree).